The chain runs to 500 residues: Phenylalanine--tRNA ligase alpha subunit (500 aa).

Residues Thr-343, 382–384 (QID), and Phe-423 each bind L-phenylalanine. Residue Glu-425 coordinates Mg(2+). Residue Phe-448 participates in L-phenylalanine binding.

Belongs to the class-II aminoacyl-tRNA synthetase family. Phe-tRNA synthetase alpha subunit type 2 subfamily. Tetramer of two alpha and two beta subunits. The cofactor is Mg(2+).

It localises to the cytoplasm. It catalyses the reaction tRNA(Phe) + L-phenylalanine + ATP = L-phenylalanyl-tRNA(Phe) + AMP + diphosphate + H(+). The protein is Phenylalanine--tRNA ligase alpha subunit of Pyrococcus abyssi (strain GE5 / Orsay).